The following is a 414-amino-acid chain: Histidine--tRNA ligase (414 aa).

It belongs to the class-II aminoacyl-tRNA synthetase family. As to quaternary structure, homodimer.

The protein resides in the cytoplasm. It catalyses the reaction tRNA(His) + L-histidine + ATP = L-histidyl-tRNA(His) + AMP + diphosphate + H(+). The protein is Histidine--tRNA ligase of Ehrlichia ruminantium (strain Welgevonden).